The chain runs to 1200 residues: Chromosome partition protein Smc (1200 aa).

33 to 40 provides a ligand contact to ATP; the sequence is PNGSGKSN. A disordered region spans residues 90 to 109; that stretch reads GENLSEPGANHNGNGNGAKI. The stretch at 202 to 528 forms a coiled coil; sequence EVQDREERCQ…AASQAQQEVQ (327 aa). In terms of domain architecture, SMC hinge spans 542 to 656; that stretch reads PGVCGLVAQL…VFDTLVNARN (115 aa). A coiled-coil region spans residues 692-1046; that stretch reads TMVSEDTAEV…ERTELLLRIE (355 aa).

The protein belongs to the SMC family. Homodimer.

It localises to the cytoplasm. Functionally, required for chromosome condensation and partitioning. This Synechocystis sp. (strain ATCC 27184 / PCC 6803 / Kazusa) protein is Chromosome partition protein Smc.